A 217-amino-acid chain; its full sequence is MTQIPPSRLHSPLDRLLVEAQRALDTVFGNPPAERPNPAGDTPDAALAPAQRQHAAGLMRINHVGEVCAQGLYFGQAAVARDDHTRQHLLTAAQEETDHLAWCADRLRELESRPSLFNPLWYAGSYALGAVAGLRGDDWSLGFVVETERQVEAHLDEHLETLPETDQRSRAILRVMKIDEARHADHAEQAGARILPPPIPSAMALASKLMKTIAYRF.

Residues E66, E96, H99, E148, E180, and H183 each coordinate Fe cation.

It belongs to the COQ7 family. It depends on Fe cation as a cofactor.

Its subcellular location is the cell membrane. It catalyses the reaction a 5-methoxy-2-methyl-3-(all-trans-polyprenyl)benzene-1,4-diol + AH2 + O2 = a 3-demethylubiquinol + A + H2O. The protein operates within cofactor biosynthesis; ubiquinone biosynthesis. Functionally, catalyzes the hydroxylation of 2-nonaprenyl-3-methyl-6-methoxy-1,4-benzoquinol during ubiquinone biosynthesis. The chain is 3-demethoxyubiquinol 3-hydroxylase from Xanthomonas campestris pv. campestris (strain 8004).